The sequence spans 228 residues: MDSVKNILLEYGLRFQEPQIEKVDKYIEELLGVPYNLTAHRDLDSAVHKNVVEILLPLKEELKGTLLDVGSGNGVPGLILAIFFPKLKVVLLDSREKSVNFLRGVIEKLDLGNVSAVKERAENFSRERREEFDYVTARAVARLNVLVEICTPALKTGGKLLFYKGPSYIEELKEAQRAMKELKVELEEVREYSLKTGERRALLILRKYESSPEKYPRRVGVPFKRPLL.

Residues G70, 121-122, and R138 each bind S-adenosyl-L-methionine; that span reads AE.

Belongs to the methyltransferase superfamily. RNA methyltransferase RsmG family.

It localises to the cytoplasm. Its function is as follows. Specifically methylates the N7 position of a guanine in 16S rRNA. In Thermotoga sp. (strain RQ2), this protein is Ribosomal RNA small subunit methyltransferase G.